The chain runs to 365 residues: Fructose-1,6-bisphosphatase class 1 2 (365 aa).

The Mg(2+) site is built by Glu-100, Asp-122, Leu-124, and Asp-125. Substrate is bound by residues 125 to 128 (DGSS) and Asn-221. Glu-293 contributes to the Mg(2+) binding site.

It belongs to the FBPase class 1 family. In terms of assembly, homotetramer. It depends on Mg(2+) as a cofactor.

The protein resides in the cytoplasm. It catalyses the reaction beta-D-fructose 1,6-bisphosphate + H2O = beta-D-fructose 6-phosphate + phosphate. It participates in carbohydrate biosynthesis; gluconeogenesis. The protein is Fructose-1,6-bisphosphatase class 1 2 of Leptothrix cholodnii (strain ATCC 51168 / LMG 8142 / SP-6) (Leptothrix discophora (strain SP-6)).